The chain runs to 626 residues: Extracellular metalloproteinase 1 (626 aa).

The first 17 residues, 1–17 (MLSSLLAGAGLVALAAS), serve as a signal peptide directing secretion. The propeptide occupies 18 to 241 (HPTSHGNALT…IHGVVDYSAD (224 aa)). Residue N315 is glycosylated (N-linked (GlcNAc...) asparagine). H425 lines the Zn(2+) pocket. Residue E426 is part of the active site. Position 429 (H429) interacts with Zn(2+). Residues 606–626 (GSGARYSSTARTGSTALPSGC) are disordered. The span at 610 to 626 (RYSSTARTGSTALPSGC) shows a compositional bias: polar residues.

This sequence belongs to the peptidase M36 family. Zn(2+) is required as a cofactor.

The protein resides in the secreted. Its function is as follows. Secreted metalloproteinase that allows assimilation of proteinaceous substrates. This chain is Extracellular metalloproteinase 1 (MEP1), found in Phaeosphaeria nodorum (strain SN15 / ATCC MYA-4574 / FGSC 10173) (Glume blotch fungus).